The sequence spans 60 residues: Large ribosomal subunit protein uL30 (60 aa).

The protein belongs to the universal ribosomal protein uL30 family. In terms of assembly, part of the 50S ribosomal subunit.

The protein is Large ribosomal subunit protein uL30 of Flavobacterium johnsoniae (strain ATCC 17061 / DSM 2064 / JCM 8514 / BCRC 14874 / CCUG 350202 / NBRC 14942 / NCIMB 11054 / UW101) (Cytophaga johnsonae).